Here is a 595-residue protein sequence, read N- to C-terminus: Indole-3-acetic acid-amido synthetase GH3.15 (595 aa).

Residues 97 to 98 (SS), Thr302, and 325 to 330 (FYGSSE) contribute to the ATP site. Residues Phe325 and Phe332 each contribute to the substrate site. Residues Tyr348 and Asp408 each coordinate ATP.

It belongs to the IAA-amido conjugating enzyme family. In terms of tissue distribution, expressed in seedlings, roots, and parts of the siliques.

It carries out the reaction (indol-3-yl)butanoate + L-cysteine + ATP = (indol-3-yl)butanoyl-L-cysteine + AMP + diphosphate + H(+). The catalysed reaction is (indol-3-yl)butanoate + L-glutamine + ATP = (indol-3-yl)butanoyl-L-glutamine + AMP + diphosphate + H(+). The enzyme catalyses 4-(2,4-dichlorophenoxy)butanoate + L-glutamine + ATP = 4-(2,4-dichlorophenoxy)butanoyl-L-glutamine + AMP + diphosphate + H(+). Indole-3-acetic acid-amido (IAA) synthetase that catalyzes the conjugation of amino acids to auxin specifically using the auxin precursor indole-3-butyric acid (IBA) and glutamine and, possibly, cysteine as substrates. Displays high catalytic activity with the auxinic phenoxyalkanoic acid herbicides 4-(2,4-dichlorophenoxy)butyric acid (2,4-DB) and to some extent 2,4-dichlorophenoxylacetic acid (2,4-D) as substrates, thus conferring resistance to herbicides. This is Indole-3-acetic acid-amido synthetase GH3.15 from Arabidopsis thaliana (Mouse-ear cress).